We begin with the raw amino-acid sequence, 448 residues long: Trigger factor (448 aa).

A PPIase FKBP-type domain is found at 172–257 (GDRVTVDFVG…MKKIEWPHLP (86 aa)).

Belongs to the FKBP-type PPIase family. Tig subfamily.

It localises to the cytoplasm. It carries out the reaction [protein]-peptidylproline (omega=180) = [protein]-peptidylproline (omega=0). In terms of biological role, involved in protein export. Acts as a chaperone by maintaining the newly synthesized protein in an open conformation. Functions as a peptidyl-prolyl cis-trans isomerase. The sequence is that of Trigger factor from Burkholderia cenocepacia (strain ATCC BAA-245 / DSM 16553 / LMG 16656 / NCTC 13227 / J2315 / CF5610) (Burkholderia cepacia (strain J2315)).